We begin with the raw amino-acid sequence, 344 residues long: Protein L-Myc-1-A (344 aa).

2 disordered regions span residues 100–162 (RLTT…DDEI) and 209–261 (PPEP…EDIV). Polar residues-rich tracts occupy residues 102 to 112 (TTASPRATNPQ), 123 to 133 (PGVNSIEQNAN), and 236 to 255 (PALQ…SGSS). A bHLH domain is found at 261-313 (VKKKNHNYLERKRRNDLRSRFLALREEVPSLTRSTKTPKVVVLSKATEFLKGL). A leucine-zipper region spans residues 313 to 341 (LVIQEQQLTAEKFKLWSRHQQLLRRISHL).

As to quaternary structure, efficient DNA binding requires dimerization with another bHLH protein. Binds DNA as a heterodimer with MAX. As to expression, high levels in oocytes, modest levels in kidney and low levels in spleen.

It localises to the nucleus. This is Protein L-Myc-1-A (mycl1-a) from Xenopus laevis (African clawed frog).